The following is a 258-amino-acid chain: Spindlin-2 (258 aa).

The disordered stretch occupies residues 1–47 (MKTPHKKATARQQTREIVDDHTLSASMRKKKISQKKQRGRPSSQTRR). Positions 13-22 (QTREIVDDHT) are enriched in basic and acidic residues. A compositionally biased stretch (basic residues) spans 27–39 (MRKKKISQKKQRG). Tudor-like domain stretches follow at residues 50 to 99 (VGCR…LELH), 129 to 178 (IGKA…YQLL), and 210 to 255 (IGKH…YDLV). Histone H3K4me3 and H3R8me2a binding stretches follow at residues E138 and 246–248 (DFH).

It belongs to the SPIN/STSY family. Interacts with C11orf84/SPINDOC.

Its subcellular location is the nucleus. Functionally, may be involved in the regulation of cell cycle progression. Exhibits H3K4me3-binding activity. In Bos taurus (Bovine), this protein is Spindlin-2 (SPIN2).